The following is a 431-amino-acid chain: STE20-related kinase adapter protein alpha (431 aa).

Serine 2 and serine 46 each carry phosphoserine. 2 disordered regions span residues 32 to 52 (EQPP…SIAS) and 314 to 344 (PSRS…SHPY). Residues 69 to 379 (YELLTIIGKG…ASTLLNHSFF (311 aa)) enclose the Protein kinase domain. Threonine 419 bears the Phosphothreonine; by LKB1 mark.

It belongs to the protein kinase superfamily. STE Ser/Thr protein kinase family. STE20 subfamily. Component of a trimeric complex composed of STK11/LKB1, STRAD (STRADA or STRADB) and CAB39/MO25 (CAB39/MO25alpha or CAB39L/MO25beta): the complex tethers STK11/LKB1 in the cytoplasm and stimulates its catalytic activity.

It is found in the nucleus. The protein localises to the cytoplasm. Its function is as follows. Pseudokinase which, in complex with CAB39/MO25 (CAB39/MO25alpha or CAB39L/MO25beta), binds to and activates STK11/LKB1. Adopts a closed conformation typical of active protein kinases and binds STK11/LKB1 as a pseudosubstrate, promoting conformational change of STK11/LKB1 in an active conformation. The protein is STE20-related kinase adapter protein alpha (Strada) of Mus musculus (Mouse).